The following is a 239-amino-acid chain: Probable 2-phosphosulfolactate phosphatase (239 aa).

It belongs to the ComB family. Mg(2+) serves as cofactor.

The enzyme catalyses (2R)-O-phospho-3-sulfolactate + H2O = (2R)-3-sulfolactate + phosphate. The protein is Probable 2-phosphosulfolactate phosphatase of Clostridium botulinum (strain 657 / Type Ba4).